Here is a 257-residue protein sequence, read N- to C-terminus: Glutamate racemase (257 aa).

Substrate contacts are provided by residues 12–13 (DS) and 44–45 (YG). Residue Cys-75 is the Proton donor/acceptor of the active site. A substrate-binding site is contributed by 76–77 (NT). The Proton donor/acceptor role is filled by Cys-185. 186–187 (TH) contacts substrate.

This sequence belongs to the aspartate/glutamate racemases family.

The enzyme catalyses L-glutamate = D-glutamate. It participates in cell wall biogenesis; peptidoglycan biosynthesis. Provides the (R)-glutamate required for cell wall biosynthesis. This Clostridium botulinum (strain Loch Maree / Type A3) protein is Glutamate racemase.